A 181-amino-acid polypeptide reads, in one-letter code: Early upstream open reading frame (181 aa).

It belongs to the EUO family.

The sequence is that of Early upstream open reading frame from Chlamydia caviae (strain ATCC VR-813 / DSM 19441 / 03DC25 / GPIC) (Chlamydophila caviae).